The primary structure comprises 255 residues: Pyridoxine 5'-phosphate synthase (255 aa).

The 3-amino-2-oxopropyl phosphate site is built by N8 and R19. H44 (proton acceptor) is an active-site residue. Residues R46 and H51 each contribute to the 1-deoxy-D-xylulose 5-phosphate site. E74 functions as the Proton acceptor in the catalytic mechanism. T111 lines the 1-deoxy-D-xylulose 5-phosphate pocket. The active-site Proton donor is H202. 3-amino-2-oxopropyl phosphate-binding positions include D203 and 225-226 (GH).

Belongs to the PNP synthase family. Homooctamer; tetramer of dimers.

Its subcellular location is the cytoplasm. The enzyme catalyses 3-amino-2-oxopropyl phosphate + 1-deoxy-D-xylulose 5-phosphate = pyridoxine 5'-phosphate + phosphate + 2 H2O + H(+). The protein operates within cofactor biosynthesis; pyridoxine 5'-phosphate biosynthesis; pyridoxine 5'-phosphate from D-erythrose 4-phosphate: step 5/5. Its function is as follows. Catalyzes the complicated ring closure reaction between the two acyclic compounds 1-deoxy-D-xylulose-5-phosphate (DXP) and 3-amino-2-oxopropyl phosphate (1-amino-acetone-3-phosphate or AAP) to form pyridoxine 5'-phosphate (PNP) and inorganic phosphate. This Xanthomonas oryzae pv. oryzae (strain MAFF 311018) protein is Pyridoxine 5'-phosphate synthase.